Here is a 689-residue protein sequence, read N- to C-terminus: Translation initiation factor IF-2 (689 aa).

The interval 41–109 (DYERVFGGGN…EAPAAEEREA (69 aa)) is disordered. A compositionally biased stretch (basic residues) spans 61–70 (RKGRQKKRRR). Residues 80–94 (RGPRAAAPSRPSRGR) show a composition bias toward low complexity. A compositionally biased stretch (basic and acidic residues) spans 96–109 (AAREEAPAAEEREA). A tr-type G domain is found at 192-361 (EKPPVITVMG…LVVAELEELR (170 aa)). Residues 201–208 (GHVDHGKT) are G1. Residue 201–208 (GHVDHGKT) participates in GTP binding. Positions 226-230 (GITQH) are G2. The interval 247–250 (DTPG) is G3. GTP is bound by residues 247–251 (DTPGH) and 301–304 (NKID). Residues 301–304 (NKID) form a G4 region. Residues 337–339 (SAK) are G5.

This sequence belongs to the TRAFAC class translation factor GTPase superfamily. Classic translation factor GTPase family. IF-2 subfamily.

It localises to the cytoplasm. In terms of biological role, one of the essential components for the initiation of protein synthesis. Protects formylmethionyl-tRNA from spontaneous hydrolysis and promotes its binding to the 30S ribosomal subunits. Also involved in the hydrolysis of GTP during the formation of the 70S ribosomal complex. This Rubrobacter xylanophilus (strain DSM 9941 / JCM 11954 / NBRC 16129 / PRD-1) protein is Translation initiation factor IF-2.